We begin with the raw amino-acid sequence, 398 residues long: NADH-quinone oxidoreductase subunit D (398 aa).

The protein belongs to the complex I 49 kDa subunit family. NDH-1 is composed of 14 different subunits. Subunits NuoB, C, D, E, F, and G constitute the peripheral sector of the complex.

Its subcellular location is the cell inner membrane. It catalyses the reaction a quinone + NADH + 5 H(+)(in) = a quinol + NAD(+) + 4 H(+)(out). Its function is as follows. NDH-1 shuttles electrons from NADH, via FMN and iron-sulfur (Fe-S) centers, to quinones in the respiratory chain. The immediate electron acceptor for the enzyme in this species is believed to be ubiquinone. Couples the redox reaction to proton translocation (for every two electrons transferred, four hydrogen ions are translocated across the cytoplasmic membrane), and thus conserves the redox energy in a proton gradient. This Anaplasma marginale (strain St. Maries) protein is NADH-quinone oxidoreductase subunit D.